The chain runs to 437 residues: UDP-sugar transporter protein SLC35A5 (437 aa).

At Met-1–Arg-21 the chain is on the cytoplasmic side. A helical transmembrane segment spans residues Pro-22–Ser-42. Over Ser-43 to Thr-65 the chain is Lumenal. A helical transmembrane segment spans residues Val-66 to Ile-86. The Cytoplasmic portion of the chain corresponds to Lys-87 to Ser-106. Residues Phe-107–Ser-129 traverse the membrane as a helical segment. Over Tyr-130 to Gln-132 the chain is Lumenal. A helical membrane pass occupies residues Pro-133–Leu-155. At Lys-156–His-158 the chain is on the cytoplasmic side. A helical membrane pass occupies residues Leu-159–Ala-179. The Lumenal portion of the chain corresponds to Ser-180–Arg-241. An N-linked (GlcNAc...) asparagine glycan is attached at Asn-217. A helical transmembrane segment spans residues Leu-242 to Tyr-262. The Cytoplasmic portion of the chain corresponds to Asn-263–Ser-276. A helical transmembrane segment spans residues Ile-277–Val-297. Over Leu-298–Asn-316 the chain is Lumenal. A helical transmembrane segment spans residues Ala-317–Leu-337. Residues Lys-338 to Met-343 lie on the Cytoplasmic side of the membrane. A helical membrane pass occupies residues Phe-344 to Phe-364. Residues Asp-365–Arg-367 are Lumenal-facing. Residues Pro-368–Ala-388 traverse the membrane as a helical segment. Topologically, residues Ser-389–Leu-437 are cytoplasmic. Phosphoserine is present on residues Ser-407, Ser-429, and Ser-432. Residues Glu-412 to Leu-437 form a disordered region. Residues Leu-421 to Asp-430 are compositionally biased toward basic and acidic residues.

It belongs to the nucleotide-sugar transporter family. SLC35A subfamily. In terms of assembly, probably forms homooligomers and heterooligomers with SLC35A1, SLC35A2, SLC35A3 and SLC35A4.

Its subcellular location is the golgi apparatus membrane. The catalysed reaction is UMP(out) + UDP-alpha-D-glucuronate(in) = UMP(in) + UDP-alpha-D-glucuronate(out). It catalyses the reaction UMP(out) + UDP-N-acetyl-alpha-D-glucosamine(in) = UMP(in) + UDP-N-acetyl-alpha-D-glucosamine(out). The enzyme catalyses UDP-N-acetyl-alpha-D-galactosamine(in) + UMP(out) = UDP-N-acetyl-alpha-D-galactosamine(out) + UMP(in). Functionally, probable UDP-sugar:UMP transmembrane antiporter involved in UDP-alpha-D-glucuronate/UDP-GlcA, UDP-GlcNAc/UDP-N-acetyl-alpha-D-glucosamine and UDP-N-acetyl-alpha-D-galactosamine/UDP-GalNAc transport from the cytosol to the lumen of the Golgi. The chain is UDP-sugar transporter protein SLC35A5 from Mus musculus (Mouse).